Reading from the N-terminus, the 745-residue chain is Dipeptidyl aminopeptidase 4 (745 aa).

A signal peptide spans 1 to 22 (MRLALFALFALMTVATALPAHA). Substrate contacts are provided by Glu208 and Glu209. Catalysis depends on charge relay system residues Ser613, Asp689, and His721.

The protein belongs to the peptidase S9B family. As to quaternary structure, homodimer.

The protein localises to the cytoplasm. It is found in the periplasm. It carries out the reaction Release of an N-terminal dipeptide, Xaa-Yaa-|-Zaa-, from a polypeptide, preferentially when Yaa is Pro, provided Zaa is neither Pro nor hydroxyproline.. Completely inhibited by the serine protease inhibitor diisopropyl fluorophosphate (DFP) and moderately by N-tosyl-L-phenyl-alanyl chloromethyl ketone (TPCK). Somewhat inhibited by phenylmethanesulfonyl fluoride (PMSF). Activity is not affected by thiol- or metalloprotease inhibitors, such as iodoacetate (IAA), EDTA, N-tosyl-L-lysyl chloromethyl ketone (TLCK), o-phenanthlorine, N-ethylmaleimide (NEM) or dithiothreitol (DTT). In terms of biological role, catalyzes the sequential release of Tyr-Pro, Phe-Pro and Gly-Pro from the N-terminus of peptides and proteins. Is able to cleaves bioactive peptide beta-casomorphin. The protein is Dipeptidyl aminopeptidase 4 of Pseudoxanthomonas mexicana.